The following is a 197-amino-acid chain: Probable UbiX-like flavin prenyltransferase (197 aa).

Residues 9 to 11, S36, 87 to 90, and R122 each bind FMN; these read GAT and SMKT.

The protein belongs to the UbiX/PAD1 family. YclB subfamily. As to quaternary structure, homododecamer.

It carries out the reaction dimethylallyl phosphate + FMNH2 = prenylated FMNH2 + phosphate. Functionally, flavin prenyltransferase that catalyzes the synthesis of the prenylated FMN cofactor (prenyl-FMN) for phenolic acid decarboxylase C. Involved in the decarboxylation and detoxification of phenolic derivatives under both aerobic and anaerobic conditions. This Escherichia coli O111:H- protein is Probable UbiX-like flavin prenyltransferase (ecdB).